Here is a 339-residue protein sequence, read N- to C-terminus: Ketol-acid reductoisomerase (NADP(+)) (339 aa).

The 182-residue stretch at 1 to 182 (MRVYYDRDAD…GGGRSGVIET (182 aa)) folds into the KARI N-terminal Rossmann domain. NADP(+) contacts are provided by residues 24–27 (YGSQ), R48, S51, T53, and 83–86 (DELQ). Residue H108 is part of the active site. NADP(+) is bound at residue G134. In terms of domain architecture, KARI C-terminal knotted spans 183–328 (NFREECETDL…GRLRAMMPWI (146 aa)). Mg(2+) is bound by residues D191, E195, E227, and E231. A substrate-binding site is contributed by S252.

This sequence belongs to the ketol-acid reductoisomerase family. Mg(2+) is required as a cofactor.

The enzyme catalyses (2R)-2,3-dihydroxy-3-methylbutanoate + NADP(+) = (2S)-2-acetolactate + NADPH + H(+). It catalyses the reaction (2R,3R)-2,3-dihydroxy-3-methylpentanoate + NADP(+) = (S)-2-ethyl-2-hydroxy-3-oxobutanoate + NADPH + H(+). It functions in the pathway amino-acid biosynthesis; L-isoleucine biosynthesis; L-isoleucine from 2-oxobutanoate: step 2/4. The protein operates within amino-acid biosynthesis; L-valine biosynthesis; L-valine from pyruvate: step 2/4. Involved in the biosynthesis of branched-chain amino acids (BCAA). Catalyzes an alkyl-migration followed by a ketol-acid reduction of (S)-2-acetolactate (S2AL) to yield (R)-2,3-dihydroxy-isovalerate. In the isomerase reaction, S2AL is rearranged via a Mg-dependent methyl migration to produce 3-hydroxy-3-methyl-2-ketobutyrate (HMKB). In the reductase reaction, this 2-ketoacid undergoes a metal-dependent reduction by NADPH to yield (R)-2,3-dihydroxy-isovalerate. The polypeptide is Ketol-acid reductoisomerase (NADP(+)) (Phenylobacterium zucineum (strain HLK1)).